Here is a 280-residue protein sequence, read N- to C-terminus: Undecaprenyl-diphosphatase (280 aa).

8 helical membrane passes run 1 to 21 (MEWI…FLPI), 40 to 60 (GAAF…VFFW), 89 to 109 (WLVV…QNAI), 116 to 136 (LWIV…ADAV), 146 to 166 (LTVK…IPGV), 191 to 211 (FLLA…KIVA), 227 to 247 (LATV…LKFI), and 260 to 280 (IALG…ATLS).

The protein belongs to the UppP family.

The protein resides in the cell membrane. The enzyme catalyses di-trans,octa-cis-undecaprenyl diphosphate + H2O = di-trans,octa-cis-undecaprenyl phosphate + phosphate + H(+). Functionally, catalyzes the dephosphorylation of undecaprenyl diphosphate (UPP). Confers resistance to bacitracin. The sequence is that of Undecaprenyl-diphosphatase from Renibacterium salmoninarum (strain ATCC 33209 / DSM 20767 / JCM 11484 / NBRC 15589 / NCIMB 2235).